The chain runs to 115 residues: Small ribosomal subunit protein uS13 (115 aa).

Residues 92–115 form a disordered region; it reads RRGLPVRGQNTKNNARTRKGSKRK. The segment covering 106-115 has biased composition (basic residues); the sequence is ARTRKGSKRK.

It belongs to the universal ribosomal protein uS13 family. Part of the 30S ribosomal subunit. Forms a loose heterodimer with protein S19. Forms two bridges to the 50S subunit in the 70S ribosome.

Functionally, located at the top of the head of the 30S subunit, it contacts several helices of the 16S rRNA. In the 70S ribosome it contacts the 23S rRNA (bridge B1a) and protein L5 of the 50S subunit (bridge B1b), connecting the 2 subunits; these bridges are implicated in subunit movement. Contacts the tRNAs in the A and P-sites. This Lactobacillus gasseri (strain ATCC 33323 / DSM 20243 / BCRC 14619 / CIP 102991 / JCM 1131 / KCTC 3163 / NCIMB 11718 / NCTC 13722 / AM63) protein is Small ribosomal subunit protein uS13.